We begin with the raw amino-acid sequence, 160 residues long: MRIGLFAVGRLKAGPEKDLAGRYLDRFAKAGPAVGLELARVVETAESRAANAETRKREEAGQLEKALADGSLLVLLDERGKALDSEAFARLLGTLRDSGKRDLMIAIGGADGLDPALHARADAVLNLGKMTWPHQLVRILIAEQLYRAVTILSGHPYHRA.

Residues Leu76, Gly108, and 127 to 132 (LGKMTW) each bind S-adenosyl-L-methionine.

The protein belongs to the RNA methyltransferase RlmH family. In terms of assembly, homodimer.

It is found in the cytoplasm. The enzyme catalyses pseudouridine(1915) in 23S rRNA + S-adenosyl-L-methionine = N(3)-methylpseudouridine(1915) in 23S rRNA + S-adenosyl-L-homocysteine + H(+). Its function is as follows. Specifically methylates the pseudouridine at position 1915 (m3Psi1915) in 23S rRNA. The protein is Ribosomal RNA large subunit methyltransferase H of Rhizobium meliloti (strain 1021) (Ensifer meliloti).